The following is a 299-amino-acid chain: HTH-type transcriptional regulator CrgA (299 aa).

Residues 1–60 form the HTH lysR-type domain; it reads MKTNSEELTVFVQVVESGSFSRAAEQLAMANSAVSRIVKRLEEKLGVNLLNRTTRQLSLT. The segment at residues 20–39 is a DNA-binding region (H-T-H motif); the sequence is FSRAAEQLAMANSAVSRIVK.

This sequence belongs to the LysR transcriptional regulatory family. As to quaternary structure, forms oligomers. Oligomerization is required for DNA binding.

Its function is as follows. Involved in the regulation of bacterial adhesion to host epithelial cells. May play a central regulatory role in meningococcal adhesion, particularly in switching from initial adhesion to intimate adhesion by downregulating the bacterial surface structures that hinder this adhesion. During intimate adhesion, negatively regulates the expression of pilC1, encoding a pilus-associated protein, pilE, encoding the pilin, and sia genes, encoding the capsule. Also negatively regulates its own expression. May also regulate other genes that are involved in intimate adhesion. Binds specifically to the promoter region of pilC1 and crgA (both harboring a CREN element), and pilE and sia (both devoid of a CREN element). Acts through interaction with RNA polymerase (RNAP). Interaction with RNAP leads to the production of short abortive transcripts, suggesting that CrgA may act by preventing RNAP from clearing the promoter. The polypeptide is HTH-type transcriptional regulator CrgA (Neisseria meningitidis serogroup C (strain 8013)).